The sequence spans 264 residues: Late embryogenesis abundant protein D-34 (264 aa).

Residues 1–16 (MSQGQPRRPQQPAGQG) show a composition bias toward low complexity. Residues 1–23 (MSQGQPRRPQQPAGQGENQEPIK) are disordered. SMP domains are found at residues 22–76 (IKYG…RNEQ), 138–194 (ITIG…AHNA), and 203–261 (IKLN…LNEN).

This sequence belongs to the LEA type SMP family.

Its function is as follows. LEA proteins are late embryonic proteins abundant in higher plant seed embryos. There are two subsets of LEA proteins (5a and 5b), the first ones are expressed when the cotyledon weight reach 80 mg and the second set are expressed above 100 mg. The function of those proteins is not known. This is Late embryogenesis abundant protein D-34 from Gossypium hirsutum (Upland cotton).